A 435-amino-acid chain; its full sequence is Serine--tRNA ligase (435 aa).

241–243 (TAE) lines the L-serine pocket. Residue 272-274 (RSE) participates in ATP binding. Glu295 lines the L-serine pocket. 359–362 (EISS) contacts ATP. Position 395 (Ser395) interacts with L-serine.

The protein belongs to the class-II aminoacyl-tRNA synthetase family. Type-1 seryl-tRNA synthetase subfamily. As to quaternary structure, homodimer. The tRNA molecule binds across the dimer.

The protein localises to the cytoplasm. The catalysed reaction is tRNA(Ser) + L-serine + ATP = L-seryl-tRNA(Ser) + AMP + diphosphate + H(+). The enzyme catalyses tRNA(Sec) + L-serine + ATP = L-seryl-tRNA(Sec) + AMP + diphosphate + H(+). It functions in the pathway aminoacyl-tRNA biosynthesis; selenocysteinyl-tRNA(Sec) biosynthesis; L-seryl-tRNA(Sec) from L-serine and tRNA(Sec): step 1/1. Its function is as follows. Catalyzes the attachment of serine to tRNA(Ser). Is also able to aminoacylate tRNA(Sec) with serine, to form the misacylated tRNA L-seryl-tRNA(Sec), which will be further converted into selenocysteinyl-tRNA(Sec). This is Serine--tRNA ligase from Actinobacillus pleuropneumoniae serotype 5b (strain L20).